The chain runs to 804 residues: Endoplasmin (804 aa).

The signal sequence occupies residues 1 to 21 (MRALWVLGLCCVLLTFGSVRA). Residues 42–44 (SRT) carry the SRT pseudosubstrate motif motif. A glycan (N-linked (GlcNAc...) asparagine) is linked at N62. Position 64 is a phosphoserine (S64). The N-linked (GlcNAc...) asparagine glycan is linked to N107. The ATP site is built by N107, D149, and N162. An N6-(2-hydroxyisobutyryl)lysine modification is found at K168. At S172 the chain carries Phosphoserine. F199 contacts ATP. N-linked (GlcNAc...) asparagine glycosylation occurs at N217. Residues 288–323 (TVEEPMEEEEAAKEEKEESDDEAAVEEEEEEKKPKT) form a disordered region. A compositionally biased stretch (acidic residues) spans 289–317 (VEEPMEEEEAAKEEKEESDDEAAVEEEEE). A phosphoserine mark is found at S306 and S403. N6-succinyllysine is present on K404. N-linked (GlcNAc...) asparagine glycosylation occurs at N445. S447 carries the post-translational modification Phosphoserine. N6-acetyllysine is present on K479. N-linked (GlcNAc...) asparagine glycans are attached at residues N481 and N502. At K633 the chain carries N6-succinyllysine. Residues 750-804 (DPDAKVEDEPEEEPEETTEDTTEDTEQDEDEEMDVGTDEEEQETAKESTAEKDEL) form a disordered region. The segment covering 757-791 (DEPEEEPEETTEDTTEDTEQDEDEEMDVGTDEEEQ) has biased composition (acidic residues). T786 carries the phosphothreonine modification. Positions 792 to 804 (ETAKESTAEKDEL) are enriched in basic and acidic residues. The short motif at 801–804 (KDEL) is the Prevents secretion from ER element.

This sequence belongs to the heat shock protein 90 family. In terms of assembly, homodimer; disulfide-linked. Component of an EIF2 complex at least composed of CELF1/CUGBP1, CALR, CALR3, EIF2S1, EIF2S2, HSP90B1 and HSPA5. Part of a large chaperone multiprotein complex comprising DNAJB11, HSP90B1, HSPA5, HYOU, PDIA2, PDIA4, PDIA6, PPIB, SDF2L1, UGGT1 and very small amounts of ERP29, but not, or at very low levels, CALR nor CANX. Interacts with AIMP1; regulates its retention in the endoplasmic reticulum. Hyperglycosylated form interacts with OS9; promoting its degradation by the endoplasmic reticulum associated degradation (ERAD). Interacts with CNPY3. This interaction is disrupted in the presence of ATP. Interacts with TLR4 and TLR9, but not with TLR3. Interacts with MZB1 in a calcium-dependent manner. Interacts with METTL23. Interacts with IL1B; the interaction facilitates cargo translocation into the ERGIC. Interacts with EIF2AK3. Phosphorylated by CK2. In terms of processing, N-glycosylated cotranslationally at Asn-217 by STT3A-containing OST-A complex: this glycosylation is constitutive. In response to various stress, 5 additional facultative sites (Asn-62, Asn-107, Asn-445, Asn-481 and Asn-502) can be glycosylated post-translationally by STT3B-containing OST-B complex, leading to a hyperglycosylated form that is degraded by the ER-associated degradation (ERAD) pathway. In normal conditions, the OST-A complex together with CCDC134 prevent glycosylation at facultative sites during protein folding, thereby preventing hyperglycosylation. Mechanistically, nascent HSP90B1 is tethered during translation to a specialized CCDC134-containing translocon that forms a microenvironment for its folding, in which STT3A associates with the SRT pseudosubstrate motif, and prevents access to facultative glycosylation sites until folding is completed, rendering its facultative sites inaccessible to the OST-B complex.

The protein resides in the endoplasmic reticulum lumen. It localises to the sarcoplasmic reticulum lumen. Its subcellular location is the melanosome. It carries out the reaction ATP + H2O = ADP + phosphate + H(+). In terms of biological role, ATP-dependent chaperone involved in the processing of proteins in the endoplasmic reticulum, regulating their transport. Together with MESD, acts as a modulator of the Wnt pathway by promoting the folding of LRP6, a coreceptor of the canonical Wnt pathway. When associated with CNPY3, required for proper folding of Toll-like receptors. Promotes folding and trafficking of TLR4 to the cell surface. May participate in the unfolding of cytosolic leaderless cargos (lacking the secretion signal sequence) such as the interleukin 1/IL-1 to facilitate their translocation into the ERGIC (endoplasmic reticulum-Golgi intermediate compartment) and secretion; the translocation process is mediated by the cargo receptor TMED10. This Macaca fascicularis (Crab-eating macaque) protein is Endoplasmin (HSP90B1).